Consider the following 499-residue polypeptide: Hexokinase-2, chloroplastic (499 aa).

Residues 1 to 30 (MSVTVSSPAGRSFHISRSPYKKISKPRVII) constitute a chloroplast transit peptide. In terms of domain architecture, Hexokinase spans 39 to 490 (LAVAPILTKL…SGIGAALLAA (452 aa)). Residues 94–232 (TGNEKGLFYA…GLGMQVSALV (139 aa)) are hexokinase small subdomain. Residues glycine 108, threonine 109, and asparagine 110 each contribute to the ADP site. 4 residues coordinate D-glucose: threonine 198, lysine 199, asparagine 233, and aspartate 234. Residues 233-479 (NDTVATLAGA…KNVVIEHSKD (247 aa)) are hexokinase large subdomain. Threonine 257 contacts ADP. D-glucose contacts are provided by asparagine 260, glutamate 288, and glutamate 318. Glycine 444 provides a ligand contact to ADP.

The protein belongs to the hexokinase family. As to expression, expressed in vascular starch sheath, xylem parenchyma, guard cells and root tips.

Its subcellular location is the plastid. The protein localises to the chloroplast stroma. The enzyme catalyses a D-hexose + ATP = a D-hexose 6-phosphate + ADP + H(+). It carries out the reaction D-fructose + ATP = D-fructose 6-phosphate + ADP + H(+). The catalysed reaction is D-glucose + ATP = D-glucose 6-phosphate + ADP + H(+). It participates in carbohydrate metabolism; hexose metabolism. The protein operates within carbohydrate degradation; glycolysis; D-glyceraldehyde 3-phosphate and glycerone phosphate from D-glucose: step 1/4. Functionally, fructose and glucose phosphorylating enzyme. The polypeptide is Hexokinase-2, chloroplastic (HXK2) (Nicotiana tabacum (Common tobacco)).